The sequence spans 705 residues: Crooked neck-like protein 1 (705 aa).

14 HAT repeats span residues 55–87 (DYRL…WEES), 89–121 (KDLT…MEMK), 123–155 (KNIN…MEDM), 157–188 (GNYP…FEQR), 190–221 (KLFE…FEER), 223–258 (GNIE…FEEK), 260–294 (KEIE…FEKQ), 304–336 (VVLG…MEEI), 338–372 (GEIE…LWIN), 382–418 (KDME…FEIR), 420–451 (LNLD…LEIE), 453–485 (GNFD…LETE), 487–521 (GETV…SEIQ), and 523–554 (KQFD…FVHS). The interval 559 to 591 (QQQKQRQQQQEEDGDSNTTKKDGGDDDNNDDIN) is disordered. The stretch at 597-629 (IFIEAHKSLSNSDKEERLLLLESWKEFEQTFGN) is one HAT 15 repeat.

The protein belongs to the crooked-neck family. As to quaternary structure, identified in the spliceosome C complex.

It is found in the nucleus. Its subcellular location is the nucleus speckle. Its function is as follows. Involved in pre-mRNA splicing process. In Dictyostelium discoideum (Social amoeba), this protein is Crooked neck-like protein 1 (crnkl1).